Consider the following 513-residue polypeptide: Maturase K (513 aa).

This sequence belongs to the intron maturase 2 family. MatK subfamily.

Its subcellular location is the plastid. It localises to the chloroplast. Usually encoded in the trnK tRNA gene intron. Probably assists in splicing its own and other chloroplast group II introns. In Pinus resinosa (Red pine), this protein is Maturase K.